A 418-amino-acid polypeptide reads, in one-letter code: Aspartate aminotransferase, cytoplasmic (418 aa).

S2 carries the N-acetylserine modification. Positions 38, 135, and 188 each coordinate L-aspartate. At K255 the chain carries N6-(pyridoxal phosphate)lysine. L-aspartate is bound at residue R387. S389 is modified (phosphoserine).

The protein belongs to the class-I pyridoxal-phosphate-dependent aminotransferase family. Homodimer. It depends on pyridoxal 5'-phosphate as a cofactor.

Its subcellular location is the cytoplasm. It is found in the peroxisome. The catalysed reaction is L-aspartate + 2-oxoglutarate = oxaloacetate + L-glutamate. Plays a key role in amino acid metabolism. The sequence is that of Aspartate aminotransferase, cytoplasmic (AAT2) from Saccharomyces cerevisiae (strain ATCC 204508 / S288c) (Baker's yeast).